Consider the following 439-residue polypeptide: 3-phosphoshikimate 1-carboxyvinyltransferase (439 aa).

3-phosphoshikimate is bound by residues lysine 31, serine 32, and arginine 36. Lysine 31 is a binding site for phosphoenolpyruvate. 2 residues coordinate phosphoenolpyruvate: glycine 103 and arginine 131. 3-phosphoshikimate contacts are provided by serine 175, glutamine 177, aspartate 322, and lysine 349. Glutamine 177 contributes to the phosphoenolpyruvate binding site. Residue aspartate 322 is the Proton acceptor of the active site. Phosphoenolpyruvate is bound by residues arginine 353 and arginine 397.

It belongs to the EPSP synthase family. As to quaternary structure, monomer.

It localises to the cytoplasm. It catalyses the reaction 3-phosphoshikimate + phosphoenolpyruvate = 5-O-(1-carboxyvinyl)-3-phosphoshikimate + phosphate. Its pathway is metabolic intermediate biosynthesis; chorismate biosynthesis; chorismate from D-erythrose 4-phosphate and phosphoenolpyruvate: step 6/7. Its function is as follows. Catalyzes the transfer of the enolpyruvyl moiety of phosphoenolpyruvate (PEP) to the 5-hydroxyl of shikimate-3-phosphate (S3P) to produce enolpyruvyl shikimate-3-phosphate and inorganic phosphate. The protein is 3-phosphoshikimate 1-carboxyvinyltransferase of Clostridium tetani (strain Massachusetts / E88).